Consider the following 122-residue polypeptide: MSADERFPRGARLLRRREFEGVLRAPEWRTANRYFRVSARQNQCGRPRLGLAVPKRVLRLAIQRHRVKRIIRESFRVRQGGLPDHDFVVGVRGAVAEADNATLFSALEELWAHARGRPCDGS.

This sequence belongs to the RnpA family. Consists of a catalytic RNA component (M1 or rnpB) and a protein subunit.

It carries out the reaction Endonucleolytic cleavage of RNA, removing 5'-extranucleotides from tRNA precursor.. RNaseP catalyzes the removal of the 5'-leader sequence from pre-tRNA to produce the mature 5'-terminus. It can also cleave other RNA substrates such as 4.5S RNA. The protein component plays an auxiliary but essential role in vivo by binding to the 5'-leader sequence and broadening the substrate specificity of the ribozyme. The protein is Ribonuclease P protein component of Halorhodospira halophila (strain DSM 244 / SL1) (Ectothiorhodospira halophila (strain DSM 244 / SL1)).